Consider the following 418-residue polypeptide: Glutamyl-tRNA reductase (418 aa).

Substrate-binding positions include 49–52, S105, 110–112, and Q116; these read TCNR and EPQ. C50 acts as the Nucleophile in catalysis. 185–190 serves as a coordination point for NADP(+); that stretch reads GAGEMI.

The protein belongs to the glutamyl-tRNA reductase family. In terms of assembly, homodimer.

It carries out the reaction (S)-4-amino-5-oxopentanoate + tRNA(Glu) + NADP(+) = L-glutamyl-tRNA(Glu) + NADPH + H(+). The protein operates within porphyrin-containing compound metabolism; protoporphyrin-IX biosynthesis; 5-aminolevulinate from L-glutamyl-tRNA(Glu): step 1/2. Its function is as follows. Catalyzes the NADPH-dependent reduction of glutamyl-tRNA(Glu) to glutamate 1-semialdehyde (GSA). In Aromatoleum aromaticum (strain DSM 19018 / LMG 30748 / EbN1) (Azoarcus sp. (strain EbN1)), this protein is Glutamyl-tRNA reductase.